The following is a 697-amino-acid chain: Probable potassium transporter 4 (697 aa).

Residues 1–29 are Cytoplasmic-facing; the sequence is MSSSHTVTVSMDVEAGQKNKDKKGISQDL. A helical membrane pass occupies residues 30–50; the sequence is ILAYKTLGVVFGGLVTSPLYV. Residues 51–66 are Extracellular-facing; that stretch reads YPSMNLTNPTEEDYLG. An N-linked (GlcNAc...) asparagine glycan is attached at asparagine 55. Residues 67-87 form a helical membrane-spanning segment; the sequence is IYSIMFWTLTLIGVVKYICIA. Residues 88–152 lie on the Cytoplasmic side of the membrane; sequence LNADDHGEGG…FIESSIIARR (65 aa). The chain crosses the membrane as a helical span at residues 153–173; the sequence is LLLLTAILGMCMLIGDGILTP. Over 174 to 189 the chain is Extracellular; the sequence is AISVLSAIDGLRGPFP. The helical transmembrane segment at 190–210 threads the bilayer; it reads SVSKPAVEGLSAAILVGLFLL. The Cytoplasmic segment spans residues 211 to 217; that stretch reads QKYGTSK. A helical membrane pass occupies residues 218–238; that stretch reads VSFMFSPIMAAWTFATPVIGV. Topologically, residues 239–271 are extracellular; it reads YSIWRYYPGIFKAMSPHYIVRFFMTNQTRGWQL. Asparagine 264 is a glycosylation site (N-linked (GlcNAc...) asparagine). A helical membrane pass occupies residues 272-292; that stretch reads LGGTVLCITGAEAMFADLGHF. Residues 293–300 are Cytoplasmic-facing; that stretch reads SKRSIQIA. A helical membrane pass occupies residues 301-321; that stretch reads FMSSIYPSLVLTYAGQTAYLI. Residues 322 to 338 are Extracellular-facing; that stretch reads NNVDDFSDGFYKFVPRP. A helical transmembrane segment spans residues 339-359; sequence VYWPMFIIATLAAIVASQSLI. Residues 360–390 lie on the Cytoplasmic side of the membrane; the sequence is SATFSVIKQSVVLDYFPRVKVVHTSKDKEGE. The chain crosses the membrane as a helical span at residues 391–411; the sequence is VYSPETNYMLMLLCVGVILGF. Residues 412 to 422 lie on the Extracellular side of the membrane; sequence GDGKDIGNAFG. A helical membrane pass occupies residues 423–443; sequence VVVILVMLITTILLTLVMLII. The Cytoplasmic segment spans residues 444-447; the sequence is WGTH. The chain crosses the membrane as a helical span at residues 448 to 468; that stretch reads VVLVALYLVPFLLLEATYVSA. Over 469-475 the chain is Extracellular; sequence VCTKILR. A helical membrane pass occupies residues 476–496; the sequence is GGWVPFAVSVALAAVMFGWYY. Over 497-697 the chain is Cytoplasmic; it reads GRQRKTEYEA…RVEIGMLYKA (201 aa).

The protein belongs to the HAK/KUP transporter (TC 2.A.72.3) family.

Its subcellular location is the membrane. Functionally, high-affinity potassium transporter. This Oryza sativa subsp. japonica (Rice) protein is Probable potassium transporter 4 (HAK4).